The chain runs to 90 residues: UPF0223 protein lmo1058 (90 aa).

This sequence belongs to the UPF0223 family.

This Listeria monocytogenes serovar 1/2a (strain ATCC BAA-679 / EGD-e) protein is UPF0223 protein lmo1058.